The following is a 1020-amino-acid chain: Sodium/potassium-transporting ATPase subunit alpha-2 (1020 aa).

The propeptide occupies 1–5; sequence MGRGA. The interval 1-31 is disordered; that stretch reads MGRGAGREYSPAATTAENGGGKKKQKEKELD. The Cytoplasmic segment spans residues 6–85; that stretch reads GREYSPAATT…NALTPPPTTP (80 aa). Serine 10 is modified (phosphoserine). Residues 80–82 are interaction with phosphoinositide-3 kinase; it reads PPP. The helical transmembrane segment at 86 to 106 threads the bilayer; it reads EWVKFCRQLFGGFSILLWIGA. At 107 to 129 the chain is on the extracellular side; it reads ILCFLAYGIQAAMEDEPSNDNLY. Residues 130–150 form a helical membrane-spanning segment; the sequence is LGVVLAAVVIVTGCFSYYQEA. Over 151 to 286 the chain is Cytoplasmic; it reads KSSKIMDSFK…VGRTPIAMEI (136 aa). Over residues 212-227 the composition is skewed to polar residues; the sequence is DNSSLTGESEPQTRSP. The disordered stretch occupies residues 212–231; sequence DNSSLTGESEPQTRSPEFTH. Residues 287–306 form a helical membrane-spanning segment; the sequence is EHFIQLITGVAVFLGVSFFV. At 307–318 the chain is on the extracellular side; that stretch reads LSLILGYSWLEA. A helical transmembrane segment spans residues 319 to 336; the sequence is VIFLIGIIVANVPEGLLA. Topologically, residues 337 to 769 are cytoplasmic; that stretch reads TVTVCLTLTA…EEGRLIFDNL (433 aa). Aspartate 374 (4-aspartylphosphate intermediate) is an active-site residue. Serine 439, serine 450, and serine 559 each carry phosphoserine. The residue at position 570 (threonine 570) is a Phosphothreonine. Residues serine 587 and serine 672 each carry the phosphoserine modification. Aspartate 714 and aspartate 718 together coordinate Mg(2+). Residues 770 to 789 form a helical membrane-spanning segment; the sequence is KKSIAYTLTSNIPEITPFLL. Over 790–799 the chain is Extracellular; sequence FIIANIPLPL. Residues 800–820 traverse the membrane as a helical segment; the sequence is GTVTILCIDLGTDMVPAISLA. The Cytoplasmic segment spans residues 821–840; the sequence is YEAAESDIMKRQPRNPQTDK. Serine 826 carries the post-translational modification Phosphoserine. A helical transmembrane segment spans residues 841-863; the sequence is LVNERLISMAYGQIGMIQALGGF. The Extracellular portion of the chain corresponds to 864–915; the sequence is FTYFVILAENGFLPSRLLGIRLDWDDRSMNDLEDSYGQEWTYEQRKVVEFTC. The helical transmembrane segment at 916–935 threads the bilayer; the sequence is HTAFFASIVVVQWADLIICK. Residues 936-948 are Cytoplasmic-facing; that stretch reads TRRNSVFQQGMKN. Residue serine 940 is modified to Phosphoserine; by PKA. A helical transmembrane segment spans residues 949–967; sequence KILIFGLLEETALAAFLSY. Over 968 to 982 the chain is Extracellular; sequence CPGMGVALRMYPLKV. A helical membrane pass occupies residues 983–1003; the sequence is TWWFCAFPYSLLIFIYDEVRK. The Cytoplasmic segment spans residues 1004–1020; the sequence is LILRRYPGGWVEKETYY.

The protein belongs to the cation transport ATPase (P-type) (TC 3.A.3) family. Type IIC subfamily. As to quaternary structure, the sodium/potassium-transporting ATPase is composed of a catalytic alpha subunit, an auxiliary non-catalytic beta subunit and an additional regulatory subunit. Interacts with regulatory subunit FXYD1.

It is found in the membrane. Its subcellular location is the cell membrane. It carries out the reaction K(+)(out) + Na(+)(in) + ATP + H2O = K(+)(in) + Na(+)(out) + ADP + phosphate + H(+). Its function is as follows. This is the catalytic component of the active enzyme, which catalyzes the hydrolysis of ATP coupled with the exchange of sodium and potassium ions across the plasma membrane. This action creates the electrochemical gradient of sodium and potassium, providing the energy for active transport of various nutrients. This is Sodium/potassium-transporting ATPase subunit alpha-2 (ATP1A2) from Sus scrofa (Pig).